The chain runs to 228 residues: Small ribosomal subunit protein uS2c (228 aa).

This sequence belongs to the universal ribosomal protein uS2 family.

It is found in the plastid. The protein resides in the chloroplast. The polypeptide is Small ribosomal subunit protein uS2c (rps2) (Mesostigma viride (Green alga)).